Consider the following 1265-residue polypeptide: 1-phosphatidylinositol 4,5-bisphosphate phosphodiesterase gamma-2 (1265 aa).

The region spanning 20-131 is the PH domain; the sequence is RALELGTVMT…WLSGLKILHQ (112 aa). The PI-PLC X-box domain occupies 312 to 456; sequence QDMNNPLSHY…LREKIIIKHK (145 aa). Residues His-327 and His-372 contribute to the active site. SH2 domains are found at residues 532 to 635 and 646 to 735; these read WFHK…TDPV and WYYD…RYPV. Tyr-753 and Tyr-759 each carry phosphotyrosine; by BTK. Residues 769-829 form the SH3 domain; it reads MPQRTVKALY…PSNYVEDIST (61 aa). Residues 930 to 1044 enclose the PI-PLC Y-box domain; sequence LSDLVVYCKP…GYVLQPESMR (115 aa). The C2 domain occupies 1038-1169; that stretch reads LQPESMRTEK…SGFRSVPLKN (132 aa). Tyr-1197 carries the phosphotyrosine; by BTK modification. Residues Tyr-1217 and Tyr-1245 each carry the phosphotyrosine modification.

As to quaternary structure, part of a complex composed of EEIG1, TNFRSF11A/RANK, PLCG2, GAB2, TEC and BTK; complex formation increases in the presence of TNFSF11/RANKL. Interacts (via SH2 domain) with CSF1R (tyrosine phosphorylated). Interacts constitutively with THEMIS2. It depends on Ca(2+) as a cofactor. In terms of processing, phosphorylated on tyrosine residues by CSF1R. Phosphorylated on tyrosine residues by BTK and SYK; upon ligand-induced activation of a variety of growth factor receptors and immune system receptors. Phosphorylation leads to increased phospholipase activity.

Its subcellular location is the membrane raft. The catalysed reaction is a 1,2-diacyl-sn-glycero-3-phospho-(1D-myo-inositol-4,5-bisphosphate) + H2O = 1D-myo-inositol 1,4,5-trisphosphate + a 1,2-diacyl-sn-glycerol + H(+). Its function is as follows. The production of the second messenger molecules diacylglycerol (DAG) and inositol 1,4,5-trisphosphate (IP3) is mediated by activated phosphatidylinositol-specific phospholipase C enzymes. It is a crucial enzyme in transmembrane signaling. This is 1-phosphatidylinositol 4,5-bisphosphate phosphodiesterase gamma-2 from Homo sapiens (Human).